The following is a 411-amino-acid chain: CCA-adding enzyme (411 aa).

ATP-binding residues include glycine 8 and arginine 11. CTP-binding residues include glycine 8 and arginine 11. Residues glutamate 21 and aspartate 23 each contribute to the Mg(2+) site. Residues arginine 91, arginine 137, and arginine 140 each contribute to the ATP site. 3 residues coordinate CTP: arginine 91, arginine 137, and arginine 140. The region spanning 227–328 is the HD domain; it reads LGNQTMTRLS…MTIFQAFDCW (102 aa).

The protein belongs to the tRNA nucleotidyltransferase/poly(A) polymerase family. Bacterial CCA-adding enzyme type 2 subfamily. Mg(2+) serves as cofactor.

The enzyme catalyses a tRNA precursor + 2 CTP + ATP = a tRNA with a 3' CCA end + 3 diphosphate. It catalyses the reaction a tRNA with a 3' CCA end + 2 CTP + ATP = a tRNA with a 3' CCACCA end + 3 diphosphate. Catalyzes the addition and repair of the essential 3'-terminal CCA sequence in tRNAs without using a nucleic acid template. Adds these three nucleotides in the order of C, C, and A to the tRNA nucleotide-73, using CTP and ATP as substrates and producing inorganic pyrophosphate. tRNA 3'-terminal CCA addition is required both for tRNA processing and repair. Also involved in tRNA surveillance by mediating tandem CCA addition to generate a CCACCA at the 3' terminus of unstable tRNAs. While stable tRNAs receive only 3'-terminal CCA, unstable tRNAs are marked with CCACCA and rapidly degraded. The sequence is that of CCA-adding enzyme from Blochmanniella floridana.